The primary structure comprises 350 residues: DNA polymerase IV (350 aa).

The UmuC domain maps to 5 to 181; it reads IMHYDMDAFY…KKIKIIPGVG (177 aa). Residues Asp-9 and Asp-99 each coordinate Mg(2+). The active site involves Glu-100.

The protein belongs to the DNA polymerase type-Y family. In terms of assembly, monomer. Mg(2+) serves as cofactor.

Its subcellular location is the cytoplasm. The catalysed reaction is DNA(n) + a 2'-deoxyribonucleoside 5'-triphosphate = DNA(n+1) + diphosphate. Its function is as follows. Poorly processive, error-prone DNA polymerase involved in untargeted mutagenesis. Copies undamaged DNA at stalled replication forks, which arise in vivo from mismatched or misaligned primer ends. These misaligned primers can be extended by PolIV. Exhibits no 3'-5' exonuclease (proofreading) activity. May be involved in translesional synthesis, in conjunction with the beta clamp from PolIII. In Fusobacterium nucleatum subsp. nucleatum (strain ATCC 25586 / DSM 15643 / BCRC 10681 / CIP 101130 / JCM 8532 / KCTC 2640 / LMG 13131 / VPI 4355), this protein is DNA polymerase IV.